Consider the following 216-residue polypeptide: Protein-L-isoaspartate O-methyltransferase (216 aa).

Ser65 is a catalytic residue.

The protein belongs to the methyltransferase superfamily. L-isoaspartyl/D-aspartyl protein methyltransferase family.

The protein localises to the cytoplasm. The catalysed reaction is [protein]-L-isoaspartate + S-adenosyl-L-methionine = [protein]-L-isoaspartate alpha-methyl ester + S-adenosyl-L-homocysteine. Its function is as follows. Catalyzes the methyl esterification of L-isoaspartyl residues in peptides and proteins that result from spontaneous decomposition of normal L-aspartyl and L-asparaginyl residues. It plays a role in the repair and/or degradation of damaged proteins. The sequence is that of Protein-L-isoaspartate O-methyltransferase from Chlorobium phaeobacteroides (strain DSM 266 / SMG 266 / 2430).